The chain runs to 737 residues: Dual specificity protein kinase KNS1 (737 aa).

2 disordered regions span residues 1 to 33 (MSQNIQIGTRKRSRANMNNSTTTGPANNTSSNK) and 270 to 290 (SSLRKFTSNGSSESASSNKSN). Polar residues predominate over residues 15 to 33 (ANMNNSTTTGPANNTSSNK). The span at 277 to 290 (SNGSSESASSNKSN) shows a compositional bias: low complexity. Residues 313–720 (FVVKDLLGQG…AKDALDHEWF (408 aa)) enclose the Protein kinase domain. ATP-binding positions include 319–327 (LGQGTFGKV) and Lys343. The active-site Proton acceptor is the Asp440. Residue Thr562 is modified to Phosphothreonine.

The protein belongs to the protein kinase superfamily. CMGC Ser/Thr protein kinase family. Lammer subfamily. Post-translationally, phosphorylated (auto-) on Ser/Thr/Tyr.

It carries out the reaction L-seryl-[protein] + ATP = O-phospho-L-seryl-[protein] + ADP + H(+). The catalysed reaction is L-threonyl-[protein] + ATP = O-phospho-L-threonyl-[protein] + ADP + H(+). It catalyses the reaction L-tyrosyl-[protein] + ATP = O-phospho-L-tyrosyl-[protein] + ADP + H(+). In terms of biological role, nonessential protein kinase. The protein is Dual specificity protein kinase KNS1 (KNS1) of Saccharomyces cerevisiae (strain ATCC 204508 / S288c) (Baker's yeast).